Consider the following 206-residue polypeptide: Probable thymidylate kinase (206 aa).

10–17 serves as a coordination point for ATP; sequence GIDGSGKS.

It belongs to the thymidylate kinase family.

It catalyses the reaction dTMP + ATP = dTDP + ADP. This Methanosarcina mazei (strain ATCC BAA-159 / DSM 3647 / Goe1 / Go1 / JCM 11833 / OCM 88) (Methanosarcina frisia) protein is Probable thymidylate kinase.